We begin with the raw amino-acid sequence, 97 residues long: Mitochondrial import inner membrane translocase subunit Tim8 A (97 aa).

A Twin CX3C motif motif is present at residues 43–66; sequence CWEKCMDKPGPKLDSRAEACFVNC. 2 cysteine pairs are disulfide-bonded: Cys-43/Cys-66 and Cys-47/Cys-62. Phosphoserine occurs at positions 57, 87, 94, and 96.

Belongs to the small Tim family. In terms of assembly, heterohexamer; composed of 3 copies of TIMM8A and 3 copies of TIMM13, named soluble 70 kDa complex. Associates with the TIM22 complex, whose core is composed of TIMM22. Highly expressed in fetal and adult brain, followed by fetal lung, liver and kidney. Also expressed in heart, placenta, lung, liver, kidney, pancreas, skeletal muscle and heart.

It is found in the mitochondrion inner membrane. In terms of biological role, mitochondrial intermembrane chaperone that participates in the import and insertion of some multi-pass transmembrane proteins into the mitochondrial inner membrane. Also required for the transfer of beta-barrel precursors from the TOM complex to the sorting and assembly machinery (SAM complex) of the outer membrane. Acts as a chaperone-like protein that protects the hydrophobic precursors from aggregation and guide them through the mitochondrial intermembrane space. The TIMM8-TIMM13 complex mediates the import of proteins such as TIMM23, SLC25A12/ARALAR1 and SLC25A13/ARALAR2, while the predominant TIMM9-TIMM10 70 kDa complex mediates the import of much more proteins. Probably necessary for normal neurologic development. The chain is Mitochondrial import inner membrane translocase subunit Tim8 A (TIMM8A) from Homo sapiens (Human).